The primary structure comprises 495 residues: ATP synthase subunit beta, chloroplastic (495 aa).

172-179 (GGAGVGKT) is a binding site for ATP.

Belongs to the ATPase alpha/beta chains family. As to quaternary structure, F-type ATPases have 2 components, CF(1) - the catalytic core - and CF(0) - the membrane proton channel. CF(1) has five subunits: alpha(3), beta(3), gamma(1), delta(1), epsilon(1). CF(0) has four main subunits: a(1), b(1), b'(1) and c(9-12).

It localises to the plastid. The protein resides in the chloroplast thylakoid membrane. The catalysed reaction is ATP + H2O + 4 H(+)(in) = ADP + phosphate + 5 H(+)(out). In terms of biological role, produces ATP from ADP in the presence of a proton gradient across the membrane. The catalytic sites are hosted primarily by the beta subunits. This is ATP synthase subunit beta, chloroplastic from Scilla siberica (Siberian squill).